We begin with the raw amino-acid sequence, 140 residues long: Organic hydroperoxide resistance protein-like (140 aa).

The protein belongs to the OsmC/Ohr family.

This Staphylococcus aureus (strain bovine RF122 / ET3-1) protein is Organic hydroperoxide resistance protein-like.